Consider the following 349-residue polypeptide: Isopentenyl-diphosphate delta-isomerase (349 aa).

Position 9-10 (9-10 (RK)) interacts with substrate. FMN contacts are provided by residues 65–67 (AMT), serine 95, and asparagine 124. Substrate is bound at residue 95 to 97 (STH). Glutamine 154 contacts substrate. Glutamate 155 is a binding site for Mg(2+). FMN-binding positions include lysine 186, serine 211, threonine 216, 262–264 (GLR), and 283–284 (SR).

The protein belongs to the IPP isomerase type 2 family. As to quaternary structure, homooctamer. Dimer of tetramers. FMN serves as cofactor. NADPH is required as a cofactor. It depends on Mg(2+) as a cofactor.

Its subcellular location is the cytoplasm. It catalyses the reaction isopentenyl diphosphate = dimethylallyl diphosphate. Functionally, involved in the biosynthesis of isoprenoids. Catalyzes the 1,3-allylic rearrangement of the homoallylic substrate isopentenyl (IPP) to its allylic isomer, dimethylallyl diphosphate (DMAPP). This Staphylococcus aureus (strain MSSA476) protein is Isopentenyl-diphosphate delta-isomerase.